We begin with the raw amino-acid sequence, 524 residues long: GMP synthase [glutamine-hydrolyzing] (524 aa).

The 190-residue stretch at 7–196 folds into the Glutamine amidotransferase type-1 domain; that stretch reads PVLVVDFGAQ…LHELAGIPAS (190 aa). Residue Cys84 is the Nucleophile of the active site. Residues His170 and Glu172 contribute to the active site. The region spanning 197–398 is the GMPS ATP-PPase domain; sequence WTPSNIADVL…LGLPEEIVAR (202 aa). 224–230 contacts ATP; it reads SGGVDSA.

In terms of assembly, homodimer.

The catalysed reaction is XMP + L-glutamine + ATP + H2O = GMP + L-glutamate + AMP + diphosphate + 2 H(+). Its pathway is purine metabolism; GMP biosynthesis; GMP from XMP (L-Gln route): step 1/1. In terms of biological role, catalyzes the synthesis of GMP from XMP. The polypeptide is GMP synthase [glutamine-hydrolyzing] (Nocardia farcinica (strain IFM 10152)).